A 334-amino-acid polypeptide reads, in one-letter code: S-adenosylmethionine decarboxylase proenzyme 2 (334 aa).

F7 contributes to the substrate binding site. Catalysis depends on residues E8 and E11. E67 serves as a coordination point for substrate. S68 acts as the Schiff-base intermediate with substrate; via pyruvic acid in catalysis. Position 68 is a pyruvic acid (Ser); by autocatalysis (S68). C82 acts as the Proton donor; for catalytic activity in catalysis. F223 lines the substrate pocket. Active-site proton acceptor; for processing activity residues include S229 and H243. E247 is a substrate binding site. At S298 the chain carries Phosphoserine.

This sequence belongs to the eukaryotic AdoMetDC family. As to quaternary structure, heterotetramer of two alpha and two beta chains. It depends on pyruvate as a cofactor. In terms of processing, is synthesized initially as an inactive proenzyme. Formation of the active enzyme involves a self-maturation process in which the active site pyruvoyl group is generated from an internal serine residue via an autocatalytic post-translational modification. Two non-identical subunits are generated from the proenzyme in this reaction, and the pyruvate is formed at the N-terminus of the alpha chain, which is derived from the carboxyl end of the proenzyme. The post-translation cleavage follows an unusual pathway, termed non-hydrolytic serinolysis, in which the side chain hydroxyl group of the serine supplies its oxygen atom to form the C-terminus of the beta chain, while the remainder of the serine residue undergoes an oxidative deamination to produce ammonia and the pyruvoyl group blocking the N-terminus of the alpha chain.

The catalysed reaction is S-adenosyl-L-methionine + H(+) = S-adenosyl 3-(methylsulfanyl)propylamine + CO2. The protein operates within amine and polyamine biosynthesis; S-adenosylmethioninamine biosynthesis; S-adenosylmethioninamine from S-adenosyl-L-methionine: step 1/1. Essential for biosynthesis of the polyamines spermidine and spermine. Promotes maintenance and self-renewal of embryonic stem cells, by maintaining spermine levels. The protein is S-adenosylmethionine decarboxylase proenzyme 2 (Amd2) of Mus spretus (Western Mediterranean mouse).